A 123-amino-acid chain; its full sequence is UPF0102 protein PFL_5073 (123 aa).

Belongs to the UPF0102 family.

In Pseudomonas fluorescens (strain ATCC BAA-477 / NRRL B-23932 / Pf-5), this protein is UPF0102 protein PFL_5073.